Reading from the N-terminus, the 356-residue chain is Tyrosine recombinase XerS (356 aa).

Positions L16–T121 constitute a Core-binding (CB) domain. Residues G169 to D354 form the Tyr recombinase domain. Catalysis depends on residues R210, K234, H306, R309, and H332. The active-site O-(3'-phospho-DNA)-tyrosine intermediate is Y341.

The protein belongs to the 'phage' integrase family. XerS subfamily.

The protein resides in the cytoplasm. FtsK is required for recombination. In terms of biological role, site-specific tyrosine recombinase, which acts by catalyzing the cutting and rejoining of the recombining DNA molecules. Essential to convert dimers of the bacterial chromosome into monomers to permit their segregation at cell division. This chain is Tyrosine recombinase XerS, found in Streptococcus pneumoniae (strain P1031).